We begin with the raw amino-acid sequence, 400 residues long: tRNA-specific 2-thiouridylase MnmA (400 aa).

ATP contacts are provided by residues 19 to 26 (AMSGGVDS) and leucine 45. Cysteine 113 (nucleophile) is an active-site residue. A disulfide bridge links cysteine 113 with cysteine 210. Glycine 137 lines the ATP pocket. The segment at 160–162 (RDQ) is interaction with tRNA. The active-site Cysteine persulfide intermediate is the cysteine 210.

The protein belongs to the MnmA/TRMU family.

The protein resides in the cytoplasm. The enzyme catalyses S-sulfanyl-L-cysteinyl-[protein] + uridine(34) in tRNA + AH2 + ATP = 2-thiouridine(34) in tRNA + L-cysteinyl-[protein] + A + AMP + diphosphate + H(+). Catalyzes the 2-thiolation of uridine at the wobble position (U34) of tRNA, leading to the formation of s(2)U34. This Rhodopseudomonas palustris (strain BisB18) protein is tRNA-specific 2-thiouridylase MnmA.